Here is a 148-residue protein sequence, read N- to C-terminus: uncharacterized protein (148 aa).

Residues asparagine 37–serine 94 show a composition bias toward low complexity. The tract at residues asparagine 37–asparagine 99 is disordered.

This is an uncharacterized protein from Dictyostelium discoideum (Social amoeba).